The primary structure comprises 179 residues: Ribulose bisphosphate carboxylase small subunit, chloroplastic 5 (179 aa).

The N-terminal 58 residues, 1-58 (MASSATMLSSVATAACAAPAQASMVAPFVGLKSASAFPVTQKTATGLSTLPSNGGRVQ), are a transit peptide targeting the chloroplast.

Belongs to the RuBisCO small chain family. In terms of assembly, heterohexadecamer of 8 large and 8 small subunits.

It localises to the plastid. The protein resides in the chloroplast. Functionally, ruBisCO catalyzes two reactions: the carboxylation of D-ribulose 1,5-bisphosphate, the primary event in carbon dioxide fixation, as well as the oxidative fragmentation of the pentose substrate. Both reactions occur simultaneously and in competition at the same active site. Although the small subunit is not catalytic it is essential for maximal activity. The sequence is that of Ribulose bisphosphate carboxylase small subunit, chloroplastic 5 from Fritillaria agrestis (Stinkbells).